A 316-amino-acid chain; its full sequence is MSDKLIRAIAKDGMIRIFATETTELVNEASKIHDCTPTAAAALGRMLTAGTMMGAMLKSDKEVVTLQINGGGMAKGVTVTAYSDCSVKGYIGNPHVDLPLNTENGKLNVGEAIGKNGGLTVIKDLGLKDPYVGQVPIYSGEIAEDLAYYFTASEQIPSAVALGVLVDRDHSIKKAGGFIIQLLPGADELLGDLLTYRLDEIPSLTTMLSEGKTIEEVIEFIFDGMDLKILEEETPKYKCDCSREKVERALLSIGYKDLKELYDEGKEEELKCHFCNKAYKFTKEDIGKLLEEKEKSIADEVSEEMKKAEEKEKNKK.

Intrachain disulfides connect Cys-239/Cys-241 and Cys-272/Cys-275.

Belongs to the HSP33 family. Post-translationally, under oxidizing conditions two disulfide bonds are formed involving the reactive cysteines. Under reducing conditions zinc is bound to the reactive cysteines and the protein is inactive.

It is found in the cytoplasm. Redox regulated molecular chaperone. Protects both thermally unfolding and oxidatively damaged proteins from irreversible aggregation. Plays an important role in the bacterial defense system toward oxidative stress. In Clostridium perfringens (strain SM101 / Type A), this protein is 33 kDa chaperonin.